The following is a 348-amino-acid chain: Phosphate acyltransferase (348 aa).

This sequence belongs to the PlsX family. In terms of assembly, homodimer. Probably interacts with PlsY.

It localises to the cytoplasm. It carries out the reaction a fatty acyl-[ACP] + phosphate = an acyl phosphate + holo-[ACP]. It participates in lipid metabolism; phospholipid metabolism. Catalyzes the reversible formation of acyl-phosphate (acyl-PO(4)) from acyl-[acyl-carrier-protein] (acyl-ACP). This enzyme utilizes acyl-ACP as fatty acyl donor, but not acyl-CoA. The sequence is that of Phosphate acyltransferase from Rhizorhabdus wittichii (strain DSM 6014 / CCUG 31198 / JCM 15750 / NBRC 105917 / EY 4224 / RW1) (Sphingomonas wittichii).